The chain runs to 660 residues: Cullin-associated NEDD8-dissociated protein 1 homolog (660 aa).

K16 is covalently cross-linked (Glycyl lysine isopeptide (Lys-Gly) (interchain with G-Cter in NEDD8)). A disordered region spans residues 339–364 (TQNENDHGSDNLIDSDDGFGSDNDPE). The span at 351-363 (IDSDDGFGSDNDP) shows a compositional bias: acidic residues.

Interacts with unneddylated cullin CDC53. In terms of processing, neddylated at Lys-16.

Its function is as follows. Assembly factor of SCF (SKP1-CUL1-F-box protein) E3 ubiquitin ligase complexes that promotes the exchange of the substrate-recognition F-box subunit in SCF complexes, thereby playing a key role in the cellular repertoire of SCF complexes. Acts as a F-box protein exchange factor. Involved in the aging process. Longevity-assurance protein. This Saccharomyces cerevisiae (strain ATCC 204508 / S288c) (Baker's yeast) protein is Cullin-associated NEDD8-dissociated protein 1 homolog (LAG2).